The chain runs to 166 residues: Urease accessory protein UreE 2 (166 aa).

Residues 135-154 are disordered; that stretch reads EHGAYGGGHHHSRAGEEDFN.

The protein belongs to the UreE family.

The protein resides in the cytoplasm. Its function is as follows. Involved in urease metallocenter assembly. Binds nickel. Probably functions as a nickel donor during metallocenter assembly. This Pseudomonas syringae pv. syringae (strain B728a) protein is Urease accessory protein UreE 2.